The sequence spans 303 residues: Methionyl-tRNA formyltransferase (303 aa).

Residue 111–114 (SLLP) participates in (6S)-5,6,7,8-tetrahydrofolate binding.

Belongs to the Fmt family.

The catalysed reaction is L-methionyl-tRNA(fMet) + (6R)-10-formyltetrahydrofolate = N-formyl-L-methionyl-tRNA(fMet) + (6S)-5,6,7,8-tetrahydrofolate + H(+). Its function is as follows. Attaches a formyl group to the free amino group of methionyl-tRNA(fMet). The formyl group appears to play a dual role in the initiator identity of N-formylmethionyl-tRNA by promoting its recognition by IF2 and preventing the misappropriation of this tRNA by the elongation apparatus. This Ehrlichia chaffeensis (strain ATCC CRL-10679 / Arkansas) protein is Methionyl-tRNA formyltransferase.